A 319-amino-acid chain; its full sequence is ATP-dependent 6-phosphofructokinase (319 aa).

Position 11 (glycine 11) interacts with ATP. 21 to 25 (RSIAR) lines the ADP pocket. ATP contacts are provided by residues 72-73 (RC) and 102-105 (GDGS). Residue aspartate 103 participates in Mg(2+) binding. 125 to 127 (TID) is a substrate binding site. Aspartate 127 (proton acceptor) is an active-site residue. Arginine 154 lines the ADP pocket. Residues arginine 162 and 169-171 (MGR) contribute to the substrate site. ADP-binding positions include 185–187 (GAE), arginine 211, and 213–215 (KLH). Substrate is bound by residues glutamate 222, lysine 243, and 249–252 (HVQR).

The protein belongs to the phosphofructokinase type A (PFKA) family. ATP-dependent PFK group I subfamily. Prokaryotic clade 'B1' sub-subfamily. Homotetramer. It depends on Mg(2+) as a cofactor.

Its subcellular location is the cytoplasm. The enzyme catalyses beta-D-fructose 6-phosphate + ATP = beta-D-fructose 1,6-bisphosphate + ADP + H(+). Its pathway is carbohydrate degradation; glycolysis; D-glyceraldehyde 3-phosphate and glycerone phosphate from D-glucose: step 3/4. Its activity is regulated as follows. Allosterically activated by ADP and other diphosphonucleosides, and allosterically inhibited by phosphoenolpyruvate. Its function is as follows. Catalyzes the phosphorylation of D-fructose 6-phosphate to fructose 1,6-bisphosphate by ATP, the first committing step of glycolysis. This chain is ATP-dependent 6-phosphofructokinase, found in Finegoldia magna (strain ATCC 29328 / DSM 20472 / WAL 2508) (Peptostreptococcus magnus).